The following is a 426-amino-acid chain: Actin-like protein 6B (426 aa).

The tract at residues 39 to 82 (TTVGLLAAEEGGGLELEGDKEKKGKIFHIDTNALHVPRDGAEVM) is essential for mediating its function in dendritic development; may contribute to neuronal-specific targeting.

Belongs to the actin family. In terms of assembly, component of the multiprotein chromatin-remodeling complexes SWI/SNF: SWI/SNF-A (BAF), SWI/SNF-B (PBAF) and related complexes. The canonical complex contains a catalytic subunit (either SMARCA4/BRG1/BAF190A or SMARCA2/BRM/BAF190B) and at least SMARCE1, ACTL6A/BAF53, SMARCC1/BAF155, SMARCC2/BAF170 and SMARCB1/SNF5/BAF47. Other subunits specific to each of the complexes may also be present permitting several possible combinations developmentally and tissue specific. Component of the BAF complex, which includes at least actin (ACTB), ARID1A/BAF250A, ARID1B/BAF250B, SMARCA2/BRM, SMARCA4/BRG1/BAF190A, ACTL6A/BAF53, ACTL6B/BAF53B, SMARCE1/BAF57, SMARCC1/BAF155, SMARCC2/BAF170, SMARCB1/SNF5/INI1 and one or more SMARCD1/BAF60A, SMARCD2/BAF60B, or SMARCD3/BAF60C. Component of neuron-specific chromatin remodeling complex (nBAF complex) composed of at least, ARID1A/BAF250A or ARID1B/BAF250B, SMARCD1/BAF60A or SMARCD2/BAF60B or SMARCD3/BAF60C, SMARCA2/BRM/BAF190B, SMARCA4/BRG1/BAF190A, SMARCB1/BAF47, SMARCC1/BAF155, SMARCE1/BAF57, SMARCC2/BAF170, DPF1/BAF45B, DPF3/BAF45C, ACTL6B/BAF53B and actin (ACTB). Note that the nBAF complex is polymorphic in regard to the ATPase, SMARCA2 and SMARCA4 occupying mutually exclusive positions. May be a component of the SWI/SNF-B (PBAF) chromatin remodeling complex, at least composed of SMARCA4/BRG1, SMARCB1/BAF47/SNF5, ACTL6A/BAF53A or ACTL6B/BAF53B, SMARCE1/BAF57, SMARCD1/BAF60A, SMARCD2/BAF60B, perhaps SMARCD3/BAF60C, SMARCC1/BAF155, SMARCC2/BAF170, PBRM1/BAF180, ARID2/BAF200 and actin.

It localises to the nucleus. Its function is as follows. Involved in transcriptional activation and repression of select genes by chromatin remodeling (alteration of DNA-nucleosome topology). Component of SWI/SNF chromatin remodeling complexes that carry out key enzymatic activities, changing chromatin structure by altering DNA-histone contacts within a nucleosome in an ATP-dependent manner. Belongs to the neuron-specific chromatin remodeling complex (nBAF complex), as such plays a role in remodeling mononucleosomes in an ATP-dependent fashion, and is required for postmitotic neural development and dendritic outgrowth. During neural development a switch from a stem/progenitor to a postmitotic chromatin remodeling mechanism occurs as neurons exit the cell cycle and become committed to their adult state. The transition from proliferating neural stem/progenitor cells to postmitotic neurons requires a switch in subunit composition of the npBAF and nBAF complexes. As neural progenitors exit mitosis and differentiate into neurons, npBAF complexes which contain ACTL6A/BAF53A and PHF10/BAF45A, are exchanged for homologous alternative ACTL6B/BAF53B and DPF1/BAF45B or DPF3/BAF45C subunits in neuron-specific complexes (nBAF). The npBAF complex is essential for the self-renewal/proliferative capacity of the multipotent neural stem cells. The nBAF complex along with CREST plays a role regulating the activity of genes essential for dendrite growth. ACTL6B/BAF53B is not essential for assembly of the nBAF complex but is required for targeting the complex and CREST to the promoter of genes essential for dendritic growth. Essential for neuronal maturation and dendrite development. The chain is Actin-like protein 6B from Homo sapiens (Human).